The chain runs to 783 residues: Na(+)/H(+) exchanger protein 7 (783 aa).

A helical transmembrane segment spans residues 1 to 18 (MWIKLLFFFTTLLVSTSG). Residues 19–108 (LGDDGITALL…WHWDYVKNEL (90 aa)) lie on the Extracellular side of the membrane. A helical transmembrane segment spans residues 109–129 (VLTLFFIVIGLFKLVYHHTFV). Over 130 to 132 (TRK) the chain is Cytoplasmic. Residues 133-153 (ILPESCCLIFIGIAIGFFFVG) traverse the membrane as a helical segment. The Extracellular segment spans residues 154–159 (DATHAS). The helical transmembrane segment at 160-180 (IKFLEFKSKVFFFYLLPPIIL) threads the bilayer. Over 181-206 (ESAYSLKDRAFIENIGTILLYAVVGT) the chain is Cytoplasmic. The chain crosses the membrane as a helical span at residues 207 to 227 (ILNIVLLAAALLILIWVGIMG). The Extracellular segment spans residues 228–235 (KYNLSVMD). Residues 236 to 256 (ILTFASLVAAVDPVAVLAVFQ) form a helical membrane-spanning segment. Residues 257-262 (EVGVNK) are Cytoplasmic-facing. A helical transmembrane segment spans residues 263–283 (MLYFMVFGESLFNDAVTIVCY). The Extracellular segment spans residues 284 to 299 (NLAIEFQTLPDFTWYH). A helical transmembrane segment spans residues 300-320 (GFLGLLSFLCVSIGGLIIGLI). Topologically, residues 321 to 350 (CGAISSFVTKFTTDVRVVEPVVLFGMAYLA) are cytoplasmic. Residues 351-371 (YLGSEMFHFSGIIALIACGLF) form a helical membrane-spanning segment. Over 372–390 (QTHYACCNISYKSFTSVMY) the chain is Extracellular. Asparagine 379 carries N-linked (GlcNAc...) asparagine glycosylation. The helical intramembrane region spans 391-411 (ITKVCSTLCESLIFIILGVML). Topologically, residues 412 to 424 (VNEREWFWTDWHP) are extracellular. Residues 425–445 (VFSAVSVVLCVVVRFGVTFFL) form a helical membrane-spanning segment. Residues 446-464 (TYFVNQFTGGVRHISFQEQ) lie on the Cytoplasmic side of the membrane. The helical transmembrane segment at 465-485 (FIMSYGGLRGAVSFSLVFMIS) threads the bilayer. Residues 486–492 (ANPDVKN) lie on the Extracellular side of the membrane. The helical transmembrane segment at 493 to 513 (TMLGATYAVILFTNIIQGSTI) threads the bilayer. The Cytoplasmic portion of the chain corresponds to 514–783 (KLFVKWLNIR…TITESEETSF (270 aa)). Residues 649–702 (DNEDADQRANELIKDVSSIRQLMHNPFEDCYLDRNLTHEEEKEQARLKMKKTRA) adopt a coiled-coil conformation. The disordered stretch occupies residues 745–783 (RPSTSTRVSVEDEEQGLTMKEMEEEHPLMTITESEETSF).

The protein belongs to the monovalent cation:proton antiporter 1 (CPA1) transporter (TC 2.A.36) family. Interacts (via C-terminus) with cmd-1. In terms of tissue distribution, detected in the posterior cells of the intestine.

It localises to the basolateral cell membrane. In terms of biological role, na+/H+ exchanger which mediates the transient acidification of the coelomic space and plays a role in contraction of posterior body muscles during defecation. Probably by regulating the defecation motor program, required for fatty acid uptake by intestinal cells. In Caenorhabditis elegans, this protein is Na(+)/H(+) exchanger protein 7.